Here is a 184-residue protein sequence, read N- to C-terminus: Large ribosomal subunit protein bL9 (184 aa).

The segment at 156 to 184 (RQAKLQNQKSEQQEAEQDASKEAADADDS) is disordered. The span at 173 to 184 (DASKEAADADDS) shows a compositional bias: basic and acidic residues.

It belongs to the bacterial ribosomal protein bL9 family.

In terms of biological role, binds to the 23S rRNA. This is Large ribosomal subunit protein bL9 from Wolbachia pipientis subsp. Culex pipiens (strain wPip).